Consider the following 116-residue polypeptide: Large ribosomal subunit protein uL22 (116 aa).

This sequence belongs to the universal ribosomal protein uL22 family. In terms of assembly, part of the 50S ribosomal subunit.

Functionally, this protein binds specifically to 23S rRNA; its binding is stimulated by other ribosomal proteins, e.g. L4, L17, and L20. It is important during the early stages of 50S assembly. It makes multiple contacts with different domains of the 23S rRNA in the assembled 50S subunit and ribosome. The globular domain of the protein is located near the polypeptide exit tunnel on the outside of the subunit, while an extended beta-hairpin is found that lines the wall of the exit tunnel in the center of the 70S ribosome. The polypeptide is Large ribosomal subunit protein uL22 (Orientia tsutsugamushi (strain Boryong) (Rickettsia tsutsugamushi)).